Here is a 294-residue protein sequence, read N- to C-terminus: 4-hydroxy-tetrahydrodipicolinate synthase (294 aa).

Position 45 (threonine 45) interacts with pyruvate. Tyrosine 133 serves as the catalytic Proton donor/acceptor. The Schiff-base intermediate with substrate role is filled by lysine 161. Isoleucine 203 provides a ligand contact to pyruvate.

This sequence belongs to the DapA family. In terms of assembly, homotetramer; dimer of dimers.

It is found in the cytoplasm. The enzyme catalyses L-aspartate 4-semialdehyde + pyruvate = (2S,4S)-4-hydroxy-2,3,4,5-tetrahydrodipicolinate + H2O + H(+). It participates in amino-acid biosynthesis; L-lysine biosynthesis via DAP pathway; (S)-tetrahydrodipicolinate from L-aspartate: step 3/4. In terms of biological role, catalyzes the condensation of (S)-aspartate-beta-semialdehyde [(S)-ASA] and pyruvate to 4-hydroxy-tetrahydrodipicolinate (HTPA). The sequence is that of 4-hydroxy-tetrahydrodipicolinate synthase from Buchnera aphidicola subsp. Baizongia pistaciae (strain Bp).